We begin with the raw amino-acid sequence, 526 residues long: Acetyl-CoA hydrolase (526 aa).

Threonine 2 carries the post-translational modification N-acetylthreonine. 277 to 281 provides a ligand contact to CoA; that stretch reads GIGNI. Catalysis depends on glutamate 302, which acts as the 5-glutamyl coenzyme A thioester intermediate. Serine 350 carries the phosphoserine modification. Asparagine 392 and glycine 396 together coordinate CoA.

Belongs to the acetyl-CoA hydrolase/transferase family. Monomer. Post-translationally, glycosylated; contains mannose.

The protein resides in the cytoplasm. It carries out the reaction acetyl-CoA + H2O = acetate + CoA + H(+). In terms of biological role, presumably involved in regulating the intracellular acetyl-CoA pool for fatty acid and cholesterol synthesis and fatty acid oxidation. It may be involved in overall regulation of acetylation during melatonin synthesis. This is Acetyl-CoA hydrolase (ACH1) from Saccharomyces cerevisiae (strain ATCC 204508 / S288c) (Baker's yeast).